A 323-amino-acid chain; its full sequence is MSNLTLAQYLQQKNGNLTPELAQVIETIANSCKKIDHAIQKGALADLLGSAGNENVQGETQKKLDVLSNDFLIDALKVHPHVGGLASEELDEFTPGQQDGKYLVLFDPLDGSSNIDINMCVGTIFSILPAKNSITQTQDFMQAGTEQVAAGYVLYGPSTMMALTCGEGVAFFTFDPESQTFILTSDAIQLDADTQEFAINASNQRHWEEPVKRYIDELLAGKTSVRGKDFNMRWVACMVADIHRILCRSGIFMYPYDLKDPSKAGRLRLMYEANPMSFLIEQAGGSATTGRVRIMDIQPNDLHQRVPVIIGSKNEVDLVTSYH.

Mg(2+) is bound by residues glutamate 88, aspartate 107, leucine 109, and aspartate 110. Substrate is bound by residues 110 to 113 (DGSS) and asparagine 200. Glutamate 272 is a binding site for Mg(2+).

The protein belongs to the FBPase class 1 family. In terms of assembly, homotetramer. Mg(2+) is required as a cofactor.

It localises to the cytoplasm. The catalysed reaction is beta-D-fructose 1,6-bisphosphate + H2O = beta-D-fructose 6-phosphate + phosphate. It participates in carbohydrate biosynthesis; gluconeogenesis. The sequence is that of Fructose-1,6-bisphosphatase class 1 from Acinetobacter baylyi (strain ATCC 33305 / BD413 / ADP1).